A 293-amino-acid chain; its full sequence is Pantothenate synthetase (293 aa).

Residue 38–45 (MGALHEGH) coordinates ATP. His45 serves as the catalytic Proton donor. A (R)-pantoate-binding site is contributed by Gln69. Gln69 contributes to the beta-alanine binding site. 155–158 (GEKD) provides a ligand contact to ATP. Gln161 lines the (R)-pantoate pocket. 192–195 (QSSR) serves as a coordination point for ATP.

Belongs to the pantothenate synthetase family. Homodimer.

Its subcellular location is the cytoplasm. The enzyme catalyses (R)-pantoate + beta-alanine + ATP = (R)-pantothenate + AMP + diphosphate + H(+). The protein operates within cofactor biosynthesis; (R)-pantothenate biosynthesis; (R)-pantothenate from (R)-pantoate and beta-alanine: step 1/1. Catalyzes the condensation of pantoate with beta-alanine in an ATP-dependent reaction via a pantoyl-adenylate intermediate. This Hyphomonas neptunium (strain ATCC 15444) protein is Pantothenate synthetase.